We begin with the raw amino-acid sequence, 547 residues long: CAP-Gly domain-containing linker protein 3 (547 aa).

The disordered stretch occupies residues 1-49; it reads MTKTDPAPMAPPPRGEEEEEEEEDEPVPEAPSPTQERRQKPVVHPSAPA. Residues 16-27 show a composition bias toward acidic residues; sequence EEEEEEEEDEPV. 3 ANK repeats span residues 117 to 158, 160 to 191, and 197 to 229; these read TDMT…LRSR, TNMN…VVNS, and NHGS…LRNR. Residues 314–356 form the CAP-Gly 1 domain; it reads GTTEFASGQWVGVELDEPEGKNDGSVGGVRYFICPPKQGLFAS. The interval 365–413 is disordered; sequence DAPPSSVTSTPRTPRMDFSRVTGKGRREHKGKKKTPSSPSLGSLQQRDG. Low complexity predominate over residues 367–377; sequence PPSSVTSTPRT. Position 374 is a phosphothreonine (T374). Over residues 387 to 399 the composition is skewed to basic residues; sequence GKGRREHKGKKKT. The span at 400–410 shows a compositional bias: polar residues; sequence PSSPSLGSLQQ. Position 401 is a phosphoserine (S401). The CAP-Gly 2 domain maps to 436 to 478; it reads GKTDFAPGYWYGIELDQPTGKHDGSVFGVRYFTCPPRHGVFAP. The goLD stretch occupies residues 488-547; the sequence is STDSPGDSVGAKKVHQVTMTQPKRTFTTVRTPKDIASENSISRLLFCCWFPWMLRAEMQS. 2 S-palmitoyl cysteine lipidation sites follow: C534 and C535.

As to quaternary structure, homodimer. Interacts with AKT1 and AKT2; when AKT1 and AKT2 are phosphorylated and activated, affinity is higher for AKT2. Interacts with ZDHHC13 (via ANK repeats). Interacts with ZDHHC17 (via ANK repeats). In terms of processing, palmitoylation by ZDHHC17 regulates association with the plasma membrane.

It is found in the cell membrane. It localises to the cytoplasm. The protein localises to the golgi apparatus. Its subcellular location is the golgi stack. In terms of biological role, functions as a cytoplasmic linker protein. Involved in TGN-endosome dynamics. May modulate the cellular compartmentalization of AKT kinase family and promote its cell membrane localization, thereby playing a role in glucose transport in adipocytes. The protein is CAP-Gly domain-containing linker protein 3 (CLIP3) of Homo sapiens (Human).